A 230-amino-acid chain; its full sequence is 7-cyano-7-deazaguanine synthase (230 aa).

9–19 is an ATP binding site; it reads YSGGLDSTTCL. Zn(2+) is bound by residues Cys-190, Cys-200, Cys-203, and Cys-206.

Belongs to the QueC family. It depends on Zn(2+) as a cofactor.

It carries out the reaction 7-carboxy-7-deazaguanine + NH4(+) + ATP = 7-cyano-7-deazaguanine + ADP + phosphate + H2O + H(+). It participates in purine metabolism; 7-cyano-7-deazaguanine biosynthesis. Its function is as follows. Catalyzes the ATP-dependent conversion of 7-carboxy-7-deazaguanine (CDG) to 7-cyano-7-deazaguanine (preQ(0)). The sequence is that of 7-cyano-7-deazaguanine synthase from Syntrophotalea carbinolica (strain DSM 2380 / NBRC 103641 / GraBd1) (Pelobacter carbinolicus).